The chain runs to 425 residues: Serine--tRNA ligase (425 aa).

233–235 (TAE) is an L-serine binding site. 264–266 (RRE) provides a ligand contact to ATP. Position 287 (Glu287) interacts with L-serine. Residue 351-354 (EISS) coordinates ATP. Ser385 serves as a coordination point for L-serine.

It belongs to the class-II aminoacyl-tRNA synthetase family. Type-1 seryl-tRNA synthetase subfamily. As to quaternary structure, homodimer. The tRNA molecule binds across the dimer.

The protein localises to the cytoplasm. The catalysed reaction is tRNA(Ser) + L-serine + ATP = L-seryl-tRNA(Ser) + AMP + diphosphate + H(+). The enzyme catalyses tRNA(Sec) + L-serine + ATP = L-seryl-tRNA(Sec) + AMP + diphosphate + H(+). It participates in aminoacyl-tRNA biosynthesis; selenocysteinyl-tRNA(Sec) biosynthesis; L-seryl-tRNA(Sec) from L-serine and tRNA(Sec): step 1/1. Functionally, catalyzes the attachment of serine to tRNA(Ser). Is also able to aminoacylate tRNA(Sec) with serine, to form the misacylated tRNA L-seryl-tRNA(Sec), which will be further converted into selenocysteinyl-tRNA(Sec). The sequence is that of Serine--tRNA ligase from Prochlorococcus marinus (strain AS9601).